Consider the following 203-residue polypeptide: ATP-dependent Clp protease proteolytic subunit (203 aa).

Serine 101 (nucleophile) is an active-site residue. Histidine 126 is an active-site residue.

This sequence belongs to the peptidase S14 family. As to quaternary structure, component of the chloroplastic Clp protease core complex.

It localises to the plastid. The protein localises to the chloroplast stroma. The enzyme catalyses Hydrolysis of proteins to small peptides in the presence of ATP and magnesium. alpha-casein is the usual test substrate. In the absence of ATP, only oligopeptides shorter than five residues are hydrolyzed (such as succinyl-Leu-Tyr-|-NHMec, and Leu-Tyr-Leu-|-Tyr-Trp, in which cleavage of the -Tyr-|-Leu- and -Tyr-|-Trp bonds also occurs).. Cleaves peptides in various proteins in a process that requires ATP hydrolysis. Has a chymotrypsin-like activity. Plays a major role in the degradation of misfolded proteins. The protein is ATP-dependent Clp protease proteolytic subunit of Marchantia polymorpha (Common liverwort).